Here is a 426-residue protein sequence, read N- to C-terminus: Flotillin-1 (426 aa).

The protein belongs to the band 7/mec-2 family. Flotillin subfamily. As to quaternary structure, heterooligomeric complex of flotillins 1 and 2 and caveolins 1 and 2. In terms of tissue distribution, expressed in brain and ventral nerve cord from stage 12-16 of embryogenesis.

The protein localises to the cell membrane. Its subcellular location is the membrane. The protein resides in the caveola. Functionally, may act as a scaffolding protein within caveolar membranes, functionally participating in formation of caveolae or caveolae-like vesicles. The protein is Flotillin-1 of Drosophila melanogaster (Fruit fly).